The sequence spans 695 residues: Polyribonucleotide nucleotidyltransferase (695 aa).

Mg(2+) is bound by residues Asp-486 and Asp-492. A KH domain is found at 553 to 612; it reads PRIETMQINTSKIATVIGPGGKQIRQIIERSGAQVDINDDGVINIAASTQESINKAKELI. The region spanning 622–690 is the S1 motif domain; it reads GKVYNGRVTS…EKGQLKLSHK (69 aa).

This sequence belongs to the polyribonucleotide nucleotidyltransferase family. The cofactor is Mg(2+).

Its subcellular location is the cytoplasm. It carries out the reaction RNA(n+1) + phosphate = RNA(n) + a ribonucleoside 5'-diphosphate. Involved in mRNA degradation. Catalyzes the phosphorolysis of single-stranded polyribonucleotides processively in the 3'- to 5'-direction. In Chlamydia trachomatis serovar D (strain ATCC VR-885 / DSM 19411 / UW-3/Cx), this protein is Polyribonucleotide nucleotidyltransferase.